Reading from the N-terminus, the 124-residue chain is uncharacterized protein (124 aa).

Disordered stretches follow at residues 1–26 and 100–124; these read MRRQEALVVTAGTASEASRDGEQPRP and IPGQQSRNCSLPQTKYYSRHGGLRR. The span at 102 to 115 shows a compositional bias: polar residues; the sequence is GQQSRNCSLPQTKY.

Its subcellular location is the cytoplasm. It is found in the cytoskeleton. The protein localises to the cilium basal body. This is an uncharacterized protein from Rattus norvegicus (Rat).